The following is a 283-amino-acid chain: Quinate/shikimate dehydrogenase (NAD(+)) (283 aa).

Serine 17, threonine 69, lysine 73, asparagine 94, and aspartate 110 together coordinate shikimate. L-quinate-binding positions include 17–19, threonine 69, lysine 73, asparagine 94, and aspartate 110; that span reads SRT. Lysine 73 (proton acceptor) is an active-site residue. Residues 137–138, aspartate 158, arginine 163, 203–206, alanine 213, valine 228, and glycine 251 each bind NAD(+); these read GV and PMGM. Glutamine 258 provides a ligand contact to shikimate. Glutamine 258 contributes to the L-quinate binding site.

This sequence belongs to the shikimate dehydrogenase family. As to quaternary structure, homodimer.

It carries out the reaction L-quinate + NAD(+) = 3-dehydroquinate + NADH + H(+). The catalysed reaction is shikimate + NAD(+) = 3-dehydroshikimate + NADH + H(+). It participates in metabolic intermediate biosynthesis; chorismate biosynthesis; chorismate from D-erythrose 4-phosphate and phosphoenolpyruvate: step 4/7. It functions in the pathway aromatic compound metabolism; 3,4-dihydroxybenzoate biosynthesis; 3-dehydroquinate from D-quinate (NAD(+) route). Functionally, involved in the biosynthesis of the chorismate, which leads to the biosynthesis of aromatic amino acids, and plays a key role in the quinate degradation pathway. Catalyzes the NAD(+)-dependent oxidation of both quinate and shikimate to 3-dehydroquinate and 3-dehydroshikimate, respectively. This chain is Quinate/shikimate dehydrogenase (NAD(+)), found in Corynebacterium glutamicum (strain R).